A 611-amino-acid chain; its full sequence is Pyrichalasin H cluster regulator pyiR (611 aa).

A DNA-binding region (zn(2)-C6 fungal-type) is located at residues 11-47 (CDRCRGHKLRCIRLDPGPNDTGALLPCKRCVKAGAEC). Disordered regions lie at residues 53 to 128 (LSVK…LPPW), 169 to 192 (ALAA…DGTT), 265 to 291 (GGAG…GRSS), 401 to 427 (AHEG…AAPQ), 521 to 550 (RGGL…SDER), and 564 to 593 (SWFT…RTVE). The segment covering 59 to 69 (GDGHHSAHRAT) has biased composition (basic and acidic residues). A compositionally biased stretch (low complexity) spans 98 to 109 (PTQPAPQRQTQR). Residues 265 to 279 (GGAGSQSLRDQQMQQ) are compositionally biased toward polar residues. Residues 572-587 (GGSGGSGPGEGTGDSN) are compositionally biased toward gly residues.

The protein localises to the nucleus. Transcription factor that specifically regulates the expression of the gene cluster that mediates the biosynthesis of the mycotoxin pyrichalasin H, a tyrosine-derived cytochalasan that inhibits the growth of rice seedlings, but also inhibits lymphocyte capping and actin polymerization and alters cell morphology. Pyrichalasin H is indicated as the responsible agent for the genus-specific pathogenicity of M.grisea toward crabgrass. This chain is Pyrichalasin H cluster regulator pyiR, found in Pyricularia grisea (Crabgrass-specific blast fungus).